A 265-amino-acid polypeptide reads, in one-letter code: Signal peptidase I (265 aa).

Topologically, residues 1–19 (MQIDTKTNTNKTTAQEWKS) are cytoplasmic. A helical membrane pass occupies residues 20–40 (FAFVVCIALLIRILIMEPFTV). Residues 41–265 (PTGSMKATIL…IFRNLYNTDE (225 aa)) lie on the Periplasmic side of the membrane. Residues serine 44 and lysine 107 contribute to the active site.

It belongs to the peptidase S26 family.

It localises to the cell inner membrane. The catalysed reaction is Cleavage of hydrophobic, N-terminal signal or leader sequences from secreted and periplasmic proteins.. The protein is Signal peptidase I (lepB) of Rickettsia canadensis (strain McKiel).